The following is a 191-amino-acid chain: Thymidylate kinase (191 aa).

Residue 7–14 (GVDGVGKS) coordinates ATP.

Belongs to the thymidylate kinase family.

The catalysed reaction is dTMP + ATP = dTDP + ADP. Phosphorylation of dTMP to form dTDP in both de novo and salvage pathways of dTTP synthesis. This chain is Thymidylate kinase, found in Helicobacter pylori (strain HPAG1).